Here is a 738-residue protein sequence, read N- to C-terminus: MEACNCIEPQWPADELLMKYQYISDFFIALAYFSIPLELIYFVKKSAVFPYRWVLVQFGAFIVLCGATHLINLWTFSMHSRTVAIVMTTAKVLTAVVSCATALMLVHIIPDLLSVKTRELFLKNKAAELDREMGLIRTQEETGRHVRMLTHEIRSTLDRHTILKTTLVELGRTLALEECALWMPTRTGLELQLSYTLRQQNPVGYTVPIHLPVINQVFSSNRALKISPNSPVARMRPLAGKHMPGEVVAVRVPLLHLSNFQINDWPELSTKRYALMVLMLPSDSARQWHVHELELVEVVADQVAVALSHAAILEESMRARDLLMEQNIALDLARREAETAIRARNDFLAVMNHEMRTPMHAIIALSSLLQETELTPEQRLMVETILKSSHLLATLINDVLDLSRLEDGSLQLEIATFNLHSVFREVHNLIKPVASVKKLSVSLNLAADLPVQAVGDEKRLMQIVLNVVGNAVKFSKEGSISITAFVAKSESLRDFRAPEFFPAQSDNHFYLRVQVKDSGSGINPQDIPKLFTKFAQTQSLATRNSGGSGLGLAICKRFVNLMEGHIWIESEGPGKGCTAIFIVKLGFAERSNESKLPFLTKVQANHVQTNFPGLKVLVMDDNGSVTKGLLVHLGCDVTTVSSIDEFLHVISQEHKVVFMDVCMPGIDGYELAVRIHEKFTKRHERPVLVALTGNIDKMTKENCMRVGMDGVILKPVSVDKMRSVLSELLEHRVLFEAM.

3 helical membrane-spanning segments follow: residues 23–43 (ISDF…IYFV), 54–74 (VLVQ…INLW), and 92–112 (VLTA…IPDL). 2 residues coordinate Cu cation: cysteine 65 and histidine 69. Residues 158–307 (DRHTILKTTL…VVADQVAVAL (150 aa)) form the GAF domain. Residues 350–589 (VMNHEMRTPM…IFIVKLGFAE (240 aa)) form the Histidine kinase domain. At histidine 353 the chain carries Phosphohistidine; by autocatalysis. The 118-residue stretch at 612 to 729 (PGLKVLVMDD…KMRSVLSELL (118 aa)) folds into the Response regulatory domain. Aspartate 660 carries the 4-aspartylphosphate modification.

Belongs to the ethylene receptor family. As to quaternary structure, homodimer; disulfide-linked. Cu cation serves as cofactor. Activation probably requires a transfer of a phosphate group between a His in the transmitter domain and an Asp of the receiver domain.

It localises to the endoplasmic reticulum membrane. The enzyme catalyses ATP + protein L-histidine = ADP + protein N-phospho-L-histidine.. Functionally, may act early in the ethylene signal transduction pathway, possibly as an ethylene receptor, or as a regulator of the pathway. The sequence is that of Ethylene receptor (ETR1) from Prunus persica (Peach).